A 542-amino-acid polypeptide reads, in one-letter code: Chaperonin GroEL (542 aa).

Residues 29-32, lysine 50, 86-90, glycine 413, 477-479, and aspartate 493 contribute to the ATP site; these read TLGP, DGTTT, and NAA.

It belongs to the chaperonin (HSP60) family. As to quaternary structure, forms a cylinder of 14 subunits composed of two heptameric rings stacked back-to-back. Interacts with the co-chaperonin GroES.

It localises to the cytoplasm. It carries out the reaction ATP + H2O + a folded polypeptide = ADP + phosphate + an unfolded polypeptide.. Its function is as follows. Together with its co-chaperonin GroES, plays an essential role in assisting protein folding. The GroEL-GroES system forms a nano-cage that allows encapsulation of the non-native substrate proteins and provides a physical environment optimized to promote and accelerate protein folding. The protein is Chaperonin GroEL of Solibacter usitatus (strain Ellin6076).